The chain runs to 356 residues: Glucose-1-phosphate thymidylyltransferase (356 aa).

The Mg(2+) site is built by aspartate 107 and aspartate 221.

It belongs to the glucose-1-phosphate thymidylyltransferase family. Requires Mg(2+) as cofactor.

The catalysed reaction is dTTP + alpha-D-glucose 1-phosphate + H(+) = dTDP-alpha-D-glucose + diphosphate. It functions in the pathway antibiotic biosynthesis. Involved in the biosynthesis of the two 2,6-deoxysugars, dTDP-L-oleandrose and dTDP-D-desosamine, attached to the macrolactone ring oleandolide to produce the aglycone antibiotic oleandomycin. Catalyzes the formation of dTDP-glucose from deoxythymidine triphosphate (dTTP) and glucose 1-phosphate. In Streptomyces antibioticus, this protein is Glucose-1-phosphate thymidylyltransferase.